The following is a 466-amino-acid chain: Coproporphyrinogen III oxidase (466 aa).

FAD is bound by residues 9 to 14 (GAGITG), 34 to 35 (EA), K42, 56 to 59 (GPES), V254, and 446 to 448 (VGL).

This sequence belongs to the protoporphyrinogen/coproporphyrinogen oxidase family. Coproporphyrinogen III oxidase subfamily. FAD serves as cofactor.

It is found in the cytoplasm. It catalyses the reaction coproporphyrinogen III + 3 O2 = coproporphyrin III + 3 H2O2. It participates in porphyrin-containing compound metabolism; protoheme biosynthesis. With respect to regulation, the generation of protoporphyrin IX, but not coproporphyrin III, is stimulated by heme-bound HemQ. This stimulatory effect is mediated by superoxide. Inhibited by acifluorfen analogs. Functionally, involved in coproporphyrin-dependent heme b biosynthesis. Catalyzes the oxidation of coproporphyrinogen III to coproporphyrin III. Can also oxidize protoporphyrinogen IX. This is Coproporphyrinogen III oxidase from Staphylococcus aureus (strain NCTC 8325 / PS 47).